The sequence spans 351 residues: Rhodopsin (351 aa).

Residues 1-36 lie on the Extracellular side of the membrane; sequence MNGTEGPFFYIPMSNATGLVRSPYDYPQYYLVPPWG. N-linked (GlcNAc...) asparagine glycans are attached at residues N2 and N15. The helical transmembrane segment at 37–61 threads the bilayer; it reads YACLAAYMFLLILTGFPVNFLTLYV. Topologically, residues 62–73 are cytoplasmic; the sequence is TIEHKKLRSPLN. The chain crosses the membrane as a helical span at residues 74 to 96; the sequence is YILLNLAVADLFMVIGGFTTTMW. The Extracellular segment spans residues 97-110; the sequence is TSLNGYFVFGRMGC. C110 and C187 are oxidised to a cystine. Residues 111–133 form a helical membrane-spanning segment; sequence NIEGFFATLGGEIALWSLVVLSM. The 'Ionic lock' involved in activated form stabilization signature appears at 134–136; the sequence is ERW. At 134–152 the chain is on the cytoplasmic side; it reads ERWIVVCKPISNFRFGENH. A helical transmembrane segment spans residues 153-173; sequence AVMGVAFSWFMAAACAVPPLV. Over 174 to 202 the chain is Extracellular; it reads GWSRYIPEGMQCSCGIDYYTRAEGFNNES. N-linked (GlcNAc...) asparagine glycosylation is present at N200. A helical transmembrane segment spans residues 203–224; sequence FVIYMFVVHFTCPLTIITFCYG. At 225 to 252 the chain is on the cytoplasmic side; the sequence is RLVCTVKEAAAQQQESETTQRAEREVTR. A helical membrane pass occupies residues 253–274; it reads MVIIMFVAFLACWVPYASVAWY. At 275 to 286 the chain is on the extracellular side; sequence IFTHQGSEFGPV. Residues 287 to 308 traverse the membrane as a helical segment; sequence FMTIPAFFAKSSAVYNPVIYIC. K296 is subject to N6-(retinylidene)lysine. The Cytoplasmic segment spans residues 309-351; it reads LNKQFRHCMITTLCCGKNPFEEEEGSTTASKTEASSVCSVSPA. 2 S-palmitoyl cysteine lipidation sites follow: C322 and C323. The disordered stretch occupies residues 330–351; that stretch reads EEEGSTTASKTEASSVCSVSPA. A compositionally biased stretch (polar residues) spans 334-351; that stretch reads STTASKTEASSVCSVSPA.

This sequence belongs to the G-protein coupled receptor 1 family. Opsin subfamily. Phosphorylated on some or all of the serine and threonine residues present in the C-terminal region. In terms of processing, contains one covalently linked retinal chromophore.

The protein resides in the membrane. Its subcellular location is the cell projection. It localises to the cilium. The protein localises to the photoreceptor outer segment. Functionally, photoreceptor required for image-forming vision at low light intensity. While most salt water fish species use retinal as chromophore, most freshwater fish use 3-dehydroretinal, or a mixture of retinal and 3-dehydroretinal. Light-induced isomerization of 11-cis to all-trans retinal triggers a conformational change that activates signaling via G-proteins. Subsequent receptor phosphorylation mediates displacement of the bound G-protein alpha subunit by arrestin and terminates signaling. The protein is Rhodopsin (rho) of Sardina pilchardus (European pilchard).